The following is a 406-amino-acid chain: 5-cytosine rRNA methyltransferase NSUN4 (406 aa).

The S-adenosyl-L-methionine site is built by glycine 207, glycine 208, lysine 209, aspartate 226, arginine 231, aspartate 259, glycine 260, and aspartate 277. Cysteine 332 (nucleophile) is an active-site residue.

It belongs to the class I-like SAM-binding methyltransferase superfamily. RsmB/NOP family.

Its subcellular location is the mitochondrion. The catalysed reaction is a cytidine in rRNA + S-adenosyl-L-methionine = a 5-methylcytidine in rRNA + S-adenosyl-L-homocysteine + H(+). The enzyme catalyses a cytidine in mRNA + S-adenosyl-L-methionine = a 5-methylcytidine in mRNA + S-adenosyl-L-homocysteine + H(+). Mitochondrial RNA cytosine C(5)-methyltransferase that methylates cytosine to 5-methylcytosine (m5C) in various RNAs, such as rRNAs, mRNAs and some long non-coding RNAs (lncRNAs). Involved in mitochondrial ribosome small subunit (SSU) maturation by catalyzing methylation of mitochondrial 12S rRNA. The polypeptide is 5-cytosine rRNA methyltransferase NSUN4 (nsun4) (Xenopus laevis (African clawed frog)).